The sequence spans 540 residues: Solute carrier family 2, facilitated glucose transporter member 9 (540 aa).

The segment at 1–31 (MARKQNRNSKELGLVPLTDDTSHAGPPGPGR) is disordered. Residues 1-51 (MARKQNRNSKELGLVPLTDDTSHAGPPGPGRALLECDHLRSGVPGGRRRKD) lie on the Cytoplasmic side of the membrane. Ser9 bears the Phosphoserine mark. Residues 52-72 (WSCSLLVASLAGAFGSSFLYG) traverse the membrane as a helical segment. Residues 73 to 107 (YNLSVVNAPTPYIKAFYNESWERRHGRPIDPDTLT) lie on the Extracellular side of the membrane. The N-linked (GlcNAc...) asparagine glycan is linked to Asn90. Residues 108 to 128 (LLWSVTVSIFAIGGLVGTLIV) form a helical membrane-spanning segment. At 129-140 (KMIGKVLGRKHT) the chain is on the cytoplasmic side. A helical membrane pass occupies residues 141–161 (LLANNGFAISAALLMACSLQA). Residues 162 to 171 (GAFEMLIVGR) lie on the Extracellular side of the membrane. A helical transmembrane segment spans residues 172-192 (FIMGIDGGVALSVLPMYLSEI). Over 193–200 (SPKEIRGS) the chain is Cytoplasmic. A helical membrane pass occupies residues 201-221 (LGQVTAIFICIGVFTGQLLGL). At 222–231 (PELLGKESTW) the chain is on the extracellular side. Residues 232 to 252 (PYLFGVIVVPAVVQLLSLPFL) traverse the membrane as a helical segment. Over 253 to 316 (PDSPRYLLLE…LLRAPYVRWQ (64 aa)) the chain is Cytoplasmic. A helical membrane pass occupies residues 317 to 337 (VVTVIVTMACYQLCGLNAIWF). Residues 338–354 (YTNSIFGKAGIPPAKIP) lie on the Extracellular side of the membrane. A helical membrane pass occupies residues 355 to 375 (YVTLSTGGIETLAAVFSGLVI). Topologically, residues 376 to 381 (EHLGRR) are cytoplasmic. The helical transmembrane segment at 382–402 (PLLIGGFGLMGLFFGTLTITL) threads the bilayer. At 403–415 (TLQDHAPWVPYLS) the chain is on the extracellular side. The chain crosses the membrane as a helical span at residues 416–436 (IVGILAIIASFCSGPGGIPFI). The Cytoplasmic portion of the chain corresponds to 437 to 451 (LTGEFFQQSQRPAAF). A helical membrane pass occupies residues 452-472 (IIAGTVNWLSNFAVGLLFPFI). Over 473 to 478 (QKSLDT) the chain is Extracellular. The helical transmembrane segment at 479–499 (YCFLVFATICITGAIYLYFVL) threads the bilayer. Topologically, residues 500–540 (PETKNRTYAEISQAFSKRNKAYPPEEKIDSAVTDGKINGRP) are cytoplasmic. Position 515 is a phosphoserine (Ser515). Residues 519–540 (KAYPPEEKIDSAVTDGKINGRP) are disordered.

Belongs to the major facilitator superfamily. Sugar transporter (TC 2.A.1.1) family. Glucose transporter subfamily. Most strongly expressed in basolateral membranes of proximal renal tubular cells, liver and placenta. Also detected in lung, blood leukocytes, heart skeletal muscle and chondrocytes from articular cartilage. Detected in kidney membrane (at protein level). As to expression, only detected in the apical membranes of polarized renal tubular cells and placenta. Detected in kidney membrane (at protein level).

Its subcellular location is the cell membrane. It localises to the basolateral cell membrane. The protein localises to the apical cell membrane. The enzyme catalyses urate(out) = urate(in). Extracellular glucose and urate accelerate urate efflux. Intracellular urate, glucose and fructose accelerate urate influx. Its activity is regulated as follows. No effect of extracellular urate, glucose or fructose on urate efflux. Intracellular urate and fructose slightly accelerate urate influx. Its function is as follows. High-capacity urate transporter, which may play a role in the urate reabsorption by proximal tubules. May have a residual high-affinity, low-capacity glucose and fructose transporter activity. Transports urate at rates 45- to 60-fold faster than glucose. Does not transport galactose. May mediate small uptake of adenine but not of other nucleobases. The protein is Solute carrier family 2, facilitated glucose transporter member 9 of Homo sapiens (Human).